Reading from the N-terminus, the 317-residue chain is L-lactate dehydrogenase (317 aa).

Residues V18, D39, K44, Y69, and 83–84 each bind NAD(+); that span reads GA. Residues Q86, R92, and 124–127 contribute to the substrate site; that span reads NPVD. Residues 122–124 and S147 contribute to the NAD(+) site; that span reads VTN. 152-155 contributes to the substrate binding site; that stretch reads DTAR. Residues R157 and H172 each coordinate beta-D-fructose 1,6-bisphosphate. Residue H179 is the Proton acceptor of the active site. Y225 is subject to Phosphotyrosine. Position 234 (T234) interacts with substrate.

This sequence belongs to the LDH/MDH superfamily. LDH family. As to quaternary structure, homotetramer.

It localises to the cytoplasm. It catalyses the reaction (S)-lactate + NAD(+) = pyruvate + NADH + H(+). It functions in the pathway fermentation; pyruvate fermentation to lactate; (S)-lactate from pyruvate: step 1/1. With respect to regulation, allosterically activated by fructose 1,6-bisphosphate (FBP). In terms of biological role, catalyzes the conversion of lactate to pyruvate. This Acetivibrio thermocellus (strain ATCC 27405 / DSM 1237 / JCM 9322 / NBRC 103400 / NCIMB 10682 / NRRL B-4536 / VPI 7372) (Clostridium thermocellum) protein is L-lactate dehydrogenase.